The primary structure comprises 133 residues: ATP synthase epsilon chain, chloroplastic (133 aa).

It belongs to the ATPase epsilon chain family. F-type ATPases have 2 components, CF(1) - the catalytic core - and CF(0) - the membrane proton channel. CF(1) has five subunits: alpha(3), beta(3), gamma(1), delta(1), epsilon(1). CF(0) has three main subunits: a, b and c.

Its subcellular location is the plastid. The protein resides in the chloroplast thylakoid membrane. Produces ATP from ADP in the presence of a proton gradient across the membrane. This is ATP synthase epsilon chain, chloroplastic from Jasminum nudiflorum (Winter jasmine).